We begin with the raw amino-acid sequence, 147 residues long: 18 kDa antigen 1 (147 aa).

The sHSP domain occupies 21 to 131 (TPTRPAVMPM…RPRKIAVGAA (111 aa)).

Belongs to the small heat shock protein (HSP20) family.

Functionally, not known. This protein is one of the major immune reactive proteins in mycobacteria. The protein is 18 kDa antigen 1 of Mycobacterium avium.